Reading from the N-terminus, the 509-residue chain is ATP synthase subunit alpha (509 aa).

169–176 (GDRQTGKT) is an ATP binding site.

The protein belongs to the ATPase alpha/beta chains family. In terms of assembly, F-type ATPases have 2 components, CF(1) - the catalytic core - and CF(0) - the membrane proton channel. CF(1) has five subunits: alpha(3), beta(3), gamma(1), delta(1), epsilon(1). CF(0) has three main subunits: a(1), b(2) and c(9-12). The alpha and beta chains form an alternating ring which encloses part of the gamma chain. CF(1) is attached to CF(0) by a central stalk formed by the gamma and epsilon chains, while a peripheral stalk is formed by the delta and b chains.

Its subcellular location is the cell inner membrane. The enzyme catalyses ATP + H2O + 4 H(+)(in) = ADP + phosphate + 5 H(+)(out). Functionally, produces ATP from ADP in the presence of a proton gradient across the membrane. The alpha chain is a regulatory subunit. This chain is ATP synthase subunit alpha, found in Methylobacterium sp. (strain 4-46).